We begin with the raw amino-acid sequence, 450 residues long: Caspase Dronc (450 aa).

Positions 1 to 134 are excised as a propeptide; sequence MQPPELEIGM…RTSRKSADIV (134 aa). Residues 64–109 form the CARD domain; that stretch reads EKDVRVEQHRRLLLKITQRGPTAYNLLINALRNINCLDAAVLLESV. The required for binding Diap1 stretch occupies residues 114 to 125; the sequence is SRPPFISLNERR. Active-site residues include H271 and C318. Residues 321–324 constitute a propeptide that is removed on maturation; it reads DEYD.

The protein belongs to the peptidase C14A family. In terms of assembly, interacts (via residues 114-125) with Diap1 (via BIR 2 domain); binding blocks Dronc-mediated cell death. Can form a stable complex with Drice. Rpr, hid and grim can out-compete Dronc for binding Diap1, therefore removing Diap1-mediated ubiquitination. Interacts (via CARD domain) with Dark (via Dark CARD and WD domains); the interaction stimulates Dark oligomerization to form the apoptosome and brings pairs of Dronc molecules together on the apoptosome to facilitate their dimerization and activation by autocatalytic cleavage. Binding to Dark stimulates apoptosome assembly. After autocatalytic cleavage the Dronc caspase domain dissociates from the apoptosome but the CARD domain remains associated. Post-translationally, ubiquitinated by Diap1, leading to its subsequent degradation. Ubiquitously expressed in embryos during early stages of development. In late third instar larvae, dramatic up-regulation in salivary glands and midgut before histolysis of these tissues.

It localises to the cytoplasm. It carries out the reaction Strict requirement for an Asp residue at position P1 and with a marked preference for His at position P2. It has a preferred cleavage sequence of Leu-Gly-His-Asp-|-Xaa.. With respect to regulation, zymogen activated by autocatalytic cleavage; association with the Dark apoptosome brings multiple molecules together to facilitate their dimerization and activation by autocatalytic cleavage. In terms of biological role, involved in the activation cascade of caspases responsible for apoptosis execution. Effector of steroid-mediated apoptosis during insect metamorphosis. Overexpression promotes programmed cell death. Interaction with Diap1 is required to suppress Dronc-mediated cell death; via Diap1-mediated ubiquitination of Dronc. Rate-limiting caspase in rpr, grim and hid death pathway. Recruited to the Dark apoptosome, an adapter protein complex that mediates activation of the caspase cascade in programmed cell death initiated by the intrinsic apoptosis pathway. Association with the Dark apoptosome stimulates autocatalytic cleavage and activation of Dronc, promoting Dronc-mediated cleavage of downstream effector caspases such as Drice. The polypeptide is Caspase Dronc (Drosophila melanogaster (Fruit fly)).